Reading from the N-terminus, the 392-residue chain is Protein Wnt-1 (392 aa).

An N-terminal signal peptide occupies residues 1 to 16 (MKCLWLLVITVLCLRC). 11 disulfides stabilise this stretch: Cys-89-Cys-100, Cys-142-Cys-150, Cys-152-Cys-179, Cys-227-Cys-241, Cys-229-Cys-236, Cys-321-Cys-352, Cys-337-Cys-347, Cys-351-Cys-391, Cys-367-Cys-382, Cys-369-Cys-379, and Cys-374-Cys-375. The N-linked (GlcNAc...) asparagine glycan is linked to Asn-99. Residue Ser-233 is the site of O-palmitoleoyl serine; by PORCN attachment. 2 N-linked (GlcNAc...) asparagine glycosylation sites follow: Asn-338 and Asn-368.

Belongs to the Wnt family. Palmitoleoylated by porcupine. The lipid group functions as a sorting signal, targeting the ligand to polarized vesicles that transport WNT-1 to unique sites at the cell surface. Depalmitoleoylated by notum, leading to inhibit Wnt signaling pathway.

The protein resides in the secreted. It is found in the extracellular space. Its subcellular location is the extracellular matrix. In terms of biological role, ligand for members of the frizzled family of seven transmembrane receptors. Probable developmental protein. The polypeptide is Protein Wnt-1 (WNT-1) (Bombyx mori (Silk moth)).